The following is a 1770-amino-acid chain: Transposon Ty2-F Gag-Pol polyprotein (1770 aa).

3 stretches are compositionally biased toward polar residues: residues 1–11 (MESQQLHQNPH), 19–39 (ASVT…SASN), and 49–60 (KVNSQQETTPGT). Disordered regions lie at residues 1–86 (MESQ…GQYQ) and 359–453 (QHSE…LPDH). The RNA-binding stretch occupies residues 295–397 (ENNINVSDRL…SSKPRAAKAH (103 aa)). The span at 369–381 (TSPNTTNTKVTTR) shows a compositional bias: low complexity. 2 stretches are compositionally biased toward polar residues: residues 399–408 (IATSSKFSRV) and 415–435 (ESTV…GQQQ). Catalysis depends on aspartate 457, which acts as the For protease activity; shared with dimeric partner. The integrase-type zinc finger-like stretch occupies residues 579-636 (NVNKSKSVNKYPYPLIHRMLGHANFRSIQKSLKKNAVTYLKESDIEWSNASTYQCPDC). Residues 656–831 (ESYEPFQYLH…AGLDITTILP (176 aa)) enclose the Integrase catalytic domain. Mg(2+) contacts are provided by aspartate 667 and aspartate 732. 4 disordered regions span residues 1004-1034 (MGGT…STNE), 1059-1135 (TEEP…KSSK), 1146-1165 (LPLP…VSKD), and 1170-1205 (HSRQ…TEIE). Composition is skewed to polar residues over residues 1009–1034 (ESDT…STNE) and 1065–1082 (QRNS…STPS). A compositionally biased stretch (basic and acidic residues) spans 1151-1165 (LTHKSPTDTSDVSKD). Residues 1193-1227 (KKRSLEDNETEIEVSRDTWNNKNMRSLEPPRSKKR) carry the Bipartite nuclear localization signal motif. A Reverse transcriptase Ty1/copia-type domain is found at 1353 to 1491 (NDYYITQLDI…DILGLEIKYQ (139 aa)). 6 residues coordinate Mg(2+): aspartate 1361, aspartate 1442, aspartate 1443, aspartate 1625, glutamate 1667, and aspartate 1700. One can recognise an RNase H Ty1/copia-type domain in the interval 1625 to 1767 (DASYGNQPYY…IKTFKLLTNK (143 aa)).

The capsid protein forms a homotrimer, from which the VLPs are assembled. The protease is a homodimer, whose active site consists of two apposed aspartic acid residues. Post-translationally, initially, virus-like particles (VLPs) are composed of the structural unprocessed proteins Gag and Gag-Pol, and also contain the host initiator methionine tRNA (tRNA(i)-Met) which serves as a primer for minus-strand DNA synthesis, and a dimer of genomic Ty RNA. Processing of the polyproteins occurs within the particle and proceeds by an ordered pathway, called maturation. First, the protease (PR) is released by autocatalytic cleavage of the Gag-Pol polyprotein, and this cleavage is a prerequisite for subsequent processing at the remaining sites to release the mature structural and catalytic proteins. Maturation takes place prior to the RT reaction and is required to produce transposition-competent VLPs.

The protein localises to the cytoplasm. The protein resides in the nucleus. The catalysed reaction is DNA(n) + a 2'-deoxyribonucleoside 5'-triphosphate = DNA(n+1) + diphosphate. The enzyme catalyses Endonucleolytic cleavage to 5'-phosphomonoester.. Capsid protein (CA) is the structural component of the virus-like particle (VLP), forming the shell that encapsulates the retrotransposons dimeric RNA genome. The particles are assembled from trimer-clustered units and there are holes in the capsid shells that allow for the diffusion of macromolecules. CA also has nucleocapsid-like chaperone activity, promoting primer tRNA(i)-Met annealing to the multipartite primer-binding site (PBS), dimerization of Ty2 RNA and initiation of reverse transcription. Its function is as follows. The aspartyl protease (PR) mediates the proteolytic cleavages of the Gag and Gag-Pol polyproteins after assembly of the VLP. Functionally, reverse transcriptase/ribonuclease H (RT) is a multifunctional enzyme that catalyzes the conversion of the retro-elements RNA genome into dsDNA within the VLP. The enzyme displays a DNA polymerase activity that can copy either DNA or RNA templates, and a ribonuclease H (RNase H) activity that cleaves the RNA strand of RNA-DNA heteroduplexes during plus-strand synthesis and hydrolyzes RNA primers. The conversion leads to a linear dsDNA copy of the retrotransposon that includes long terminal repeats (LTRs) at both ends. In terms of biological role, integrase (IN) targets the VLP to the nucleus, where a subparticle preintegration complex (PIC) containing at least integrase and the newly synthesized dsDNA copy of the retrotransposon must transit the nuclear membrane. Once in the nucleus, integrase performs the integration of the dsDNA into the host genome. The sequence is that of Transposon Ty2-F Gag-Pol polyprotein (TY2B-F) from Saccharomyces cerevisiae (strain ATCC 204508 / S288c) (Baker's yeast).